Consider the following 83-residue polypeptide: Scyreptin (83 aa).

Its function is as follows. cationic antimicrobial peptide that exhibits a potent and broad-spectrum antimicrobial activity against both bacteria and fungi, as well as against the multidrug-resistant bacteria P.aeruginosa. Exhibits rapid bactericidal kinetic. Acts by destroying the integrity of bacterial membranes, leading to bacterial death. Also exhibits potent anti-biofilm activity against P.aeruginosa. Shows high thermal stability and ion tolerance, as it maintains antibacterial activity even when heated to 100 degrees Celsius for 30 minutes and in presence of high levels of NaCl, CaCl(2) and MgCl(2). Does not show cytotoxicity and hemolytic activity. In a mouse model of burn infection, exhibits a remarkably reduction in the bacterial load caused by multidrug-resistant P.aeruginosa at the site of infection, and promotes wound healing. This chain is Scyreptin, found in Scylla paramamosain (Mud crab).